Consider the following 472-residue polypeptide: UDP-N-acetylmuramate--L-alanine ligase (472 aa).

Residue 122-128 (GSHGKTT) coordinates ATP.

The protein belongs to the MurCDEF family.

The protein resides in the cytoplasm. The catalysed reaction is UDP-N-acetyl-alpha-D-muramate + L-alanine + ATP = UDP-N-acetyl-alpha-D-muramoyl-L-alanine + ADP + phosphate + H(+). Its pathway is cell wall biogenesis; peptidoglycan biosynthesis. Functionally, cell wall formation. The protein is UDP-N-acetylmuramate--L-alanine ligase of Prochlorococcus marinus (strain SARG / CCMP1375 / SS120).